Here is a 500-residue protein sequence, read N- to C-terminus: Glycerol kinase (500 aa).

Position 13 (threonine 13) interacts with ADP. Threonine 13, threonine 14, and serine 15 together coordinate ATP. Threonine 13 contributes to the sn-glycerol 3-phosphate binding site. Arginine 17 is a binding site for ADP. Residues arginine 83, glutamate 84, tyrosine 135, and aspartate 245 each coordinate sn-glycerol 3-phosphate. Glycerol is bound by residues arginine 83, glutamate 84, tyrosine 135, aspartate 245, and glutamine 246. Residues threonine 267 and glycine 310 each contribute to the ADP site. ATP-binding residues include threonine 267, glycine 310, glutamine 314, and glycine 411. ADP is bound by residues glycine 411 and asparagine 415.

It belongs to the FGGY kinase family. As to quaternary structure, homotetramer and homodimer (in equilibrium).

It catalyses the reaction glycerol + ATP = sn-glycerol 3-phosphate + ADP + H(+). The protein operates within polyol metabolism; glycerol degradation via glycerol kinase pathway; sn-glycerol 3-phosphate from glycerol: step 1/1. With respect to regulation, activated by phosphorylation and inhibited by fructose 1,6-bisphosphate (FBP). In terms of biological role, key enzyme in the regulation of glycerol uptake and metabolism. Catalyzes the phosphorylation of glycerol to yield sn-glycerol 3-phosphate. The sequence is that of Glycerol kinase from Lactobacillus acidophilus (strain ATCC 700396 / NCK56 / N2 / NCFM).